Here is a 194-residue protein sequence, read N- to C-terminus: Thymidine kinase (194 aa).

Residues Gly15–Ser22 and Asp88–Gln91 each bind ATP. Glu89 serves as the catalytic Proton acceptor. Zn(2+)-binding residues include Cys145, Cys148, Cys183, and His186.

Belongs to the thymidine kinase family. Homotetramer.

It is found in the cytoplasm. The catalysed reaction is thymidine + ATP = dTMP + ADP + H(+). The chain is Thymidine kinase from Bacillus licheniformis (strain ATCC 14580 / DSM 13 / JCM 2505 / CCUG 7422 / NBRC 12200 / NCIMB 9375 / NCTC 10341 / NRRL NRS-1264 / Gibson 46).